The sequence spans 368 residues: 2-aminoethylphosphonate--pyruvate transaminase (368 aa).

Residue lysine 192 is modified to N6-(pyridoxal phosphate)lysine.

This sequence belongs to the class-V pyridoxal-phosphate-dependent aminotransferase family. PhnW subfamily. As to quaternary structure, homodimer. Pyridoxal 5'-phosphate is required as a cofactor.

The enzyme catalyses (2-aminoethyl)phosphonate + pyruvate = phosphonoacetaldehyde + L-alanine. Its function is as follows. Involved in phosphonate degradation. This chain is 2-aminoethylphosphonate--pyruvate transaminase, found in Pseudomonas entomophila (strain L48).